The following is a 308-amino-acid chain: Glutaminase (308 aa).

The substrate site is built by serine 66, asparagine 117, glutamate 161, asparagine 168, tyrosine 192, tyrosine 244, and valine 262.

This sequence belongs to the glutaminase family. As to quaternary structure, homotetramer.

It carries out the reaction L-glutamine + H2O = L-glutamate + NH4(+). The chain is Glutaminase from Salmonella agona (strain SL483).